Here is a 977-residue protein sequence, read N- to C-terminus: Macrophage colony-stimulating factor 1 receptor (977 aa).

The N-terminal stretch at M1 to G19 is a signal peptide. At A20–P515 the chain is on the extracellular side. Ig-like C2-type domains follow at residues E24–P104, S107–R197, Q204–S298, A299–R397, and Y398–Q503. 3 cysteine pairs are disulfide-bonded: C42-C84, C127-C177, and C224-C278. N-linked (GlcNAc...) asparagine glycans are attached at residues N45 and N73. N-linked (GlcNAc...) asparagine glycans are attached at residues N302, N335, N389, N410, N449, N478, and N491. Cysteines 417 and 483 form a disulfide. Residues V516–Y536 traverse the membrane as a helical segment. Residues K537–C977 lie on the Cytoplasmic side of the membrane. The segment at Q540–K572 is regulatory juxtamembrane domain. Phosphotyrosine; by autocatalysis is present on residues Y544 and Y559. The 334-residue stretch at L580–R913 folds into the Protein kinase domain. Residues L586–V594 and K614 each bind ATP. Residues Y697 and Y706 each carry the phosphotyrosine; by autocatalysis modification. S711 carries the phosphoserine modification. Y721 is modified (phosphotyrosine; by autocatalysis). D776 acts as the Proton acceptor in catalysis. An activation loop region spans residues D794–P816. Residues Y807 and Y921 each carry the phosphotyrosine; by autocatalysis modification. The segment at Y921–A957 is disordered. The segment covering G929 to G941 has biased composition (gly residues). Y974 is subject to Phosphotyrosine; by autocatalysis.

This sequence belongs to the protein kinase superfamily. Tyr protein kinase family. CSF-1/PDGF receptor subfamily. As to quaternary structure, monomer. Homodimer. Interacts with CSF1 and IL34. Interaction with dimeric CSF1 or IL34 leads to receptor homodimerization. Interacts with INPPL1/SHIP2 and THOC5. Interacts (tyrosine phosphorylated) with PLCG2 (via SH2 domain). Interacts (tyrosine phosphorylated) with PIK3R1 (via SH2 domain). Interacts (tyrosine phosphorylated) with FYN, YES1 and SRC (via SH2 domain). Interacts (tyrosine phosphorylated) with CBL, GRB2 and SLA2. Post-translationally, autophosphorylated in response to CSF1 or IL34 binding. Phosphorylation at Tyr-559 is important for normal down-regulation of signaling by ubiquitination, internalization and degradation. Phosphorylation at Tyr-559 and Tyr-807 is important for interaction with SRC family members, including FYN, YES1 and SRC, and for subsequent activation of these protein kinases. Phosphorylation at Tyr-697 and Tyr-921 is important for interaction with GRB2. Phosphorylation at Tyr-721 is important for interaction with PIK3R1. Phosphorylation at Tyr-721 and Tyr-807 is important for interaction with PLCG2. Phosphorylation at Tyr-974 is important for interaction with CBL. Dephosphorylation by PTPN2 negatively regulates downstream signaling and macrophage differentiation. In terms of processing, ubiquitinated. Becomes rapidly polyubiquitinated after autophosphorylation, leading to its degradation. Widely expressed.

It localises to the cell membrane. It carries out the reaction L-tyrosyl-[protein] + ATP = O-phospho-L-tyrosyl-[protein] + ADP + H(+). Its activity is regulated as follows. Present in an inactive conformation in the absence of bound ligand. CSF1 or IL34 binding leads to dimerization and activation by autophosphorylation on tyrosine residues. Inhibited by imatinib/STI-571 (Gleevec), dasatinib, sunitinib/SU11248, lestaurtinib/CEP-701, midostaurin/PKC-412, Ki20227, linifanib/ABT-869, Axitinib/AG013736, sorafenib/BAY 43-9006 and GW2580. In terms of biological role, tyrosine-protein kinase that acts as a cell-surface receptor for CSF1 and IL34 and plays an essential role in the regulation of survival, proliferation and differentiation of hematopoietic precursor cells, especially mononuclear phagocytes, such as macrophages and monocytes. Promotes the release of pro-inflammatory chemokines in response to IL34 and CSF1, and thereby plays an important role in innate immunity and in inflammatory processes. Plays an important role in the regulation of osteoclast proliferation and differentiation, the regulation of bone resorption, and is required for normal bone and tooth development. Required for normal male and female fertility, and for normal development of milk ducts and acinar structures in the mammary gland during pregnancy. Promotes reorganization of the actin cytoskeleton, regulates formation of membrane ruffles, cell adhesion and cell migration, and promotes cancer cell invasion. Activates several signaling pathways in response to ligand binding, including the ERK1/2 and the JNK pathway. Phosphorylates PIK3R1, PLCG2, GRB2, SLA2 and CBL. Activation of PLCG2 leads to the production of the cellular signaling molecules diacylglycerol and inositol 1,4,5-trisphosphate, that then lead to the activation of protein kinase C family members, especially PRKCD. Phosphorylation of PIK3R1, the regulatory subunit of phosphatidylinositol 3-kinase, leads to activation of the AKT1 signaling pathway. Activated CSF1R also mediates activation of the MAP kinases MAPK1/ERK2 and/or MAPK3/ERK1, and of the SRC family kinases SRC, FYN and YES1. Activated CSF1R transmits signals both via proteins that directly interact with phosphorylated tyrosine residues in its intracellular domain, or via adapter proteins, such as GRB2. Promotes activation of STAT family members STAT3, STAT5A and/or STAT5B. Promotes tyrosine phosphorylation of SHC1 and INPP5D/SHIP-1. Receptor signaling is down-regulated by protein phosphatases, such as INPP5D/SHIP-1, that dephosphorylate the receptor and its downstream effectors, and by rapid internalization of the activated receptor. In the central nervous system, may play a role in the development of microglia macrophages. This is Macrophage colony-stimulating factor 1 receptor (Csf1r) from Mus musculus (Mouse).